The primary structure comprises 231 residues: Large ribosomal subunit protein uL1 (231 aa).

It belongs to the universal ribosomal protein uL1 family. In terms of assembly, part of the 50S ribosomal subunit.

In terms of biological role, binds directly to 23S rRNA. The L1 stalk is quite mobile in the ribosome, and is involved in E site tRNA release. Its function is as follows. Protein L1 is also a translational repressor protein, it controls the translation of the L11 operon by binding to its mRNA. The polypeptide is Large ribosomal subunit protein uL1 (Staphylococcus carnosus (strain TM300)).